A 479-amino-acid polypeptide reads, in one-letter code: Putative F-box protein At1g67390 (479 aa).

Positions 40-88 (DDRISKLPDDVLVMILASLSTEDALKTSVLSTRWKNVWKQVPYLHFDLL) constitute an F-box domain.

This chain is Putative F-box protein At1g67390, found in Arabidopsis thaliana (Mouse-ear cress).